Reading from the N-terminus, the 472-residue chain is Argininosuccinate lyase (472 aa).

The protein belongs to the lyase 1 family. Argininosuccinate lyase subfamily.

It localises to the cytoplasm. It carries out the reaction 2-(N(omega)-L-arginino)succinate = fumarate + L-arginine. It participates in amino-acid biosynthesis; L-arginine biosynthesis; L-arginine from L-ornithine and carbamoyl phosphate: step 3/3. The polypeptide is Argininosuccinate lyase (Mycobacterium avium (strain 104)).